A 182-amino-acid polypeptide reads, in one-letter code: Putative minor fimbrial subunit PmfF (182 aa).

The first 22 residues, 1–22, serve as a signal peptide directing secretion; that stretch reads MKNSIIKSAITCLLLLSPSTFA.

This sequence belongs to the fimbrial protein family.

The protein localises to the fimbrium. The sequence is that of Putative minor fimbrial subunit PmfF (pmfF) from Proteus mirabilis (strain HI4320).